A 449-amino-acid chain; its full sequence is NADP-specific glutamate dehydrogenase (449 aa).

Substrate-binding residues include lysine 92, glutamine 113, and lysine 116. Lysine 128 serves as the catalytic Proton donor. Residue glycine 167 coordinates substrate. Residues threonine 211 and asparagine 242 each contribute to the NADP(+) site. Residue serine 380 coordinates substrate.

This sequence belongs to the Glu/Leu/Phe/Val dehydrogenases family. As to quaternary structure, homohexamer.

The catalysed reaction is L-glutamate + NADP(+) + H2O = 2-oxoglutarate + NH4(+) + NADPH + H(+). Its function is as follows. Catalyzes the reversible oxidative deamination of glutamate to alpha-ketoglutarate and ammonia. This is NADP-specific glutamate dehydrogenase (gdhA) from Haemophilus influenzae (strain ATCC 51907 / DSM 11121 / KW20 / Rd).